The primary structure comprises 218 residues: Glutathione S-transferase Mu 1 (218 aa).

The GST N-terminal domain occupies 2–88 (PMTLGYWDVR…YLARKHGLCG (87 aa)). Residues 7-8 (YW), 46-50 (WLSEK), 59-60 (NL), and 72-73 (QS) each bind glutathione. Residues 90–208 (TEEERIRVDI…KSSRFIRVPV (119 aa)) enclose the GST C-terminal domain. Tyr-116 provides a ligand contact to substrate.

This sequence belongs to the GST superfamily. Mu family. Homodimer. In terms of tissue distribution, well expressed in rabbit liver, brain and kidney.

It is found in the cytoplasm. The catalysed reaction is RX + glutathione = an S-substituted glutathione + a halide anion + H(+). Functionally, conjugation of reduced glutathione to a wide number of exogenous and endogenous hydrophobic electrophiles. The protein is Glutathione S-transferase Mu 1 of Oryctolagus cuniculus (Rabbit).